The sequence spans 140 residues: MGNRRLAREHALQTLYYADTGKTQGKDINEYKEDFKDSLDAAGFEFCSGIIDGALEHQAELDKIISAYAKNWSLNRMSVVDRSILRMAAYEMLFSPENTPVAAVIDEAIELAKKFSTENSSRFINGLLDQIKKERKNGQN.

It belongs to the NusB family.

In terms of biological role, involved in transcription antitermination. Required for transcription of ribosomal RNA (rRNA) genes. Binds specifically to the boxA antiterminator sequence of the ribosomal RNA (rrn) operons. The protein is Transcription antitermination protein NusB of Elusimicrobium minutum (strain Pei191).